The following is a 598-amino-acid chain: Elongation factor 4 (598 aa).

The 178-residue stretch at 4–181 folds into the tr-type G domain; it reads KKIRNFAIIA…AIVNLIPPPQ (178 aa). Residues 16–21 and 128–131 contribute to the GTP site; these read DHGKST and NKID.

Belongs to the TRAFAC class translation factor GTPase superfamily. Classic translation factor GTPase family. LepA subfamily.

It is found in the cell membrane. It carries out the reaction GTP + H2O = GDP + phosphate + H(+). Required for accurate and efficient protein synthesis under certain stress conditions. May act as a fidelity factor of the translation reaction, by catalyzing a one-codon backward translocation of tRNAs on improperly translocated ribosomes. Back-translocation proceeds from a post-translocation (POST) complex to a pre-translocation (PRE) complex, thus giving elongation factor G a second chance to translocate the tRNAs correctly. Binds to ribosomes in a GTP-dependent manner. The sequence is that of Elongation factor 4 from Mesomycoplasma hyopneumoniae (strain 232) (Mycoplasma hyopneumoniae).